A 176-amino-acid chain; its full sequence is RNA polymerase sigma factor SigZ (176 aa).

Residues 30–43 (DLLQIVFMKIQVHL) carry the Polymerase core binding motif. Residues 125–144 (QKELSEKLGISYSGAKSRVQ) constitute a DNA-binding region (H-T-H motif).

Belongs to the sigma-70 factor family. ECF subfamily.

Its function is as follows. Sigma factors are initiation factors that promote the attachment of RNA polymerase to specific initiation sites and are then released. The sequence is that of RNA polymerase sigma factor SigZ (sigZ) from Bacillus subtilis (strain 168).